We begin with the raw amino-acid sequence, 526 residues long: Zinc finger protein 69 homolog (526 aa).

Residues 1-39 enclose the SCAN box domain; sequence MPQQLLITLPTEASTWVKLQHPKKAVEGAPLWEDVTKMF. In terms of domain architecture, KRAB spans 76 to 147; that stretch reads LTFKDISIDF…EKEGPGDPSS (72 aa). 9 C2H2-type zinc fingers span residues 271 to 293, 299 to 321, 327 to 349, 355 to 377, 383 to 405, 411 to 433, 439 to 461, 467 to 489, and 495 to 517; these read YECNICEKIFKQPIHLTEHMRIH, FRCKECGRAFSQSASLSTHQRIH, FECEECGKAFRHRSSLNQHHRTH, YVCDKCQKAFSQNISLVQHLRTH, FTCNECGKTFRQIRHLSEHIRIH, YACTACCKTFSHRAYLTHHQRIH, YKCKECGKAFRQRIHLSNHKTVH, YECNRCGKAYRHDSSFKKHQRHH, and YECNECGKAFSYNSSLSRHHEIH.

It belongs to the krueppel C2H2-type zinc-finger protein family. As to expression, expressed in visceral and subcutaneous adipose tissue.

The protein resides in the nucleus. Putative transcription factor that appears to regulate lipid metabolism. This is Zinc finger protein 69 homolog (ZFP69) from Homo sapiens (Human).